The primary structure comprises 778 residues: DISP complex protein LRCH3 (778 aa).

10 LRR repeats span residues 56 to 79, 81 to 104, 105 to 127, 128 to 150, 152 to 172, 173 to 195, 197 to 218, 220 to 239, 240 to 264, and 266 to 290; these read AAVT…AANH, LTDT…ACHF, VSLE…VLNL, QALT…LCNL, LKVL…IGHL, RHLT…IGNL, ALRD…LAEV, LIRL…CYRN, LRHL…CIKG, and IHIF…ERRP. The interval 56 to 290 is mediates interaction with DOCK7; it reads AAVTGVLSLS…PDLPDYERRP (235 aa). Residues Ser-324, Ser-415, and Ser-419 each carry the phosphoserine modification. Residues 382–642 form a mediates direct interaction with MYO6 region; that stretch reads TTEEEENDVK…PATDPTDAIT (261 aa). The tract at residues 511–536 is disordered; that stretch reads QKASHNPQRQQPPGNGECSFPSRRSQ. Over residues 514-523 the composition is skewed to polar residues; it reads SHNPQRQQPP. Ser-608 and Ser-625 each carry phosphoserine. The 114-residue stretch at 645-758 folds into the Calponin-homology (CH) domain; sequence REEELKLIDQ…VTVQALLELA (114 aa). Residues 758–778 form a disordered region; that stretch reads APPKQPPPQQPQQQQPQLSAV. Residues 768–778 are compositionally biased toward low complexity; sequence PQQQQPQLSAV.

As to quaternary structure, component of the DOCK7-induced septin displacement/DISP complex, at least composed of DOCK7, LRCH3 and MYO6.

It localises to the cytoplasm. Its function is as follows. As part of the DISP complex, may regulate the association of septins with actin and thereby regulate the actin cytoskeleton. This chain is DISP complex protein LRCH3, found in Mus musculus (Mouse).